The primary structure comprises 170 residues: Tachykinin-4 (170 aa).

A signal peptide spans 1–16 (MLPLLALFLLIGPAVS). Residues 17 to 54 (TTTRDREDLTFGAEAESWVTVNLKGIPVPSIELKLQEL) constitute a propeptide that is removed on maturation. Met-66 bears the Methionine amide mark. The propeptide occupies 67–170 (GKRVEGVHPI…SQMMPRPSRP (104 aa)). Residues 107 to 170 (QETNHQSAGP…SQMMPRPSRP (64 aa)) are disordered. Positions 123–140 (SLQSQRGRSEPPNHQQHV) are enriched in polar residues.

This sequence belongs to the tachykinin family.

It localises to the secreted. Its function is as follows. Tachykinins are active peptides which excite neurons, evoke behavioral responses, are potent vasodilators and secretagogues, and contract (directly or indirectly) many smooth muscles. Hemokinin induces plasma extravasation, mast cell degranulation, muscle contraction, salivary secretion and scratching behavior. Increases sperm motility. Induces potent analgesic effects and may play a role in pain modulation. Promotes survival of bone marrow B lineage cells and of cultured LPS-stimulated pre-B cells and may act as an autocrine factor required for B-cell survival and proliferation. Lowers systemic arterial pressure following intravenous injection. Induces interferon-gamma production and may play a role in the inflammatory response. Shows potent affinity and specificity for the NK-1 receptor. In Rattus norvegicus (Rat), this protein is Tachykinin-4.